Consider the following 521-residue polypeptide: MSSLHNDKILILDFGAQYTQLIARRIREIGVYCEIWAWDHDPSEIAGFGAKGIILSGGPESTTLPGAPVAPQEVFDSGLPVFGICYGMQTLAAQLGGATEAADQREFGHAEVDVVAADALFSGLTDHAGASRLNVWMSHGDHVSQVPPGFTITAVTDRIPVAAMSNEDKRWYGVQFHPEVTHTLQGQTLLRRFVVDVCGCQTLWTAANIIDDQIARVREQVGDDEVILGLSGGVDSSVVAALLHKAIGDKLTCVFVDTGLLRWQEGDQVMAMFAEHMGVKVIRVNAADRYFAKLEGVSDPEAKRKIIGNLFVDIFDEESNKLANAKWLAQGTIYPDVIESAGSKTGKAHVIKSHHNVGGLPEHMKLGLVEPLRELFKDEVRRLGVELGLPRTMVYRHPFPGPGLGVRILGEVKREYAELLAKADAIFIDELRKADLYDKTSQAFAVFLPVKSVGVVGDARAYEWVIALRAVETIDFMTAHWAHLPYDFLGTVSNRIINELRGVSRVVYDISGKPPATIEWE.

The Glutamine amidotransferase type-1 domain occupies 8–203 (KILILDFGAQ…VVDVCGCQTL (196 aa)). Residue Cys-85 is the Nucleophile of the active site. Catalysis depends on residues His-177 and Glu-179. Residues 204–396 (WTAANIIDDQ…LGLPRTMVYR (193 aa)) enclose the GMPS ATP-PPase domain. 231–237 (SGGVDSS) contributes to the ATP binding site.

Homodimer.

The enzyme catalyses XMP + L-glutamine + ATP + H2O = GMP + L-glutamate + AMP + diphosphate + 2 H(+). Its pathway is purine metabolism; GMP biosynthesis; GMP from XMP (L-Gln route): step 1/1. Functionally, catalyzes the synthesis of GMP from XMP. The chain is GMP synthase [glutamine-hydrolyzing] from Xanthomonas campestris pv. campestris (strain B100).